We begin with the raw amino-acid sequence, 324 residues long: Phthalate 4,5-dioxygenase oxygenase reductase subunit (324 aa).

The 103-residue stretch at 9–111 (DGFTGLKVIA…ATPQNEFELI (103 aa)) folds into the FAD-binding FR-type domain. Residue 115-229 (RQFIFVAGGI…PGSIHFESFG (115 aa)) participates in NAD(+) binding. Residues 241-324 (FSVTLGRSGI…ARNDVLVLDL (84 aa)) form the 2Fe-2S ferredoxin-type domain. The [2Fe-2S] cluster site is built by C275, C280, C283, and C311.

Belongs to the PDR/VanB family. As to quaternary structure, this dioxygenase system consists of two proteins: phthalate oxygenase and phthalate oxygenase reductase. Requires FMN as cofactor.

It catalyses the reaction phthalate + NADH + O2 + H(+) = cis-4,5-dihydroxycyclohexa-2,6-diene-1,2-dicarboxylate + NAD(+). It participates in xenobiotic degradation; phthalate degradation; 3,4-dihydroxybenzoate from phthalate: step 1/3. The polypeptide is Phthalate 4,5-dioxygenase oxygenase reductase subunit (pht2) (Pseudomonas putida (Arthrobacter siderocapsulatus)).